The sequence spans 459 residues: Cysteine--tRNA ligase (459 aa).

Cys28 contributes to the Zn(2+) binding site. A 'HIGH' region motif is present at residues Val30–His40. Cys209, His234, and Glu238 together coordinate Zn(2+). A 'KMSKS' region motif is present at residues Lys266–Ser270. Position 269 (Lys269) interacts with ATP.

It belongs to the class-I aminoacyl-tRNA synthetase family. In terms of assembly, monomer. Zn(2+) is required as a cofactor.

The protein resides in the cytoplasm. The catalysed reaction is tRNA(Cys) + L-cysteine + ATP = L-cysteinyl-tRNA(Cys) + AMP + diphosphate. This chain is Cysteine--tRNA ligase, found in Haemophilus influenzae (strain 86-028NP).